Reading from the N-terminus, the 231-residue chain is Ribosyldihydronicotinamide dehydrogenase [quinone] (231 aa).

FAD contacts are provided by residues histidine 12, 18–21 (FNGS), and 104–107 (LYWF). 127 to 129 (FDV) is a binding site for substrate. FAD is bound by residues 148-151 (TTGG) and tyrosine 156. Zn(2+) contacts are provided by histidine 174 and histidine 178. Glutamate 194 provides a ligand contact to FAD. Residue serine 197 is modified to Phosphoserine. Arginine 201 provides a ligand contact to FAD. A Zn(2+)-binding site is contributed by cysteine 223.

This sequence belongs to the NAD(P)H dehydrogenase (quinone) family. Homodimer. Zn(2+) is required as a cofactor. FAD serves as cofactor.

It is found in the cytoplasm. The enzyme catalyses 1-(beta-D-ribofuranosyl)-1,4-dihydronicotinamide + a quinone + H(+) = beta-nicotinamide D-riboside + a quinol. Functionally, the enzyme apparently serves as a quinone reductase in connection with conjugation reactions of hydroquinones involved in detoxification pathways as well as in biosynthetic processes such as the vitamin K-dependent gamma-carboxylation of glutamate residues in prothrombin synthesis. The protein is Ribosyldihydronicotinamide dehydrogenase [quinone] (Nqo2) of Rattus norvegicus (Rat).